The following is a 441-amino-acid chain: Ribosomal protein uS12 methylthiotransferase RimO (441 aa).

In terms of domain architecture, MTTase N-terminal spans 8–118 (PKIGFVSLGC…VLEHVHHYVP (111 aa)). [4Fe-4S] cluster is bound by residues Cys-17, Cys-53, Cys-82, Cys-150, Cys-154, and Cys-157. The region spanning 136–373 (LTPRHYAYLK…MQLQQQISAE (238 aa)) is the Radical SAM core domain. Residues 376 to 441 (QEKVGREILV…DEYDLWGSRV (66 aa)) enclose the TRAM domain.

The protein belongs to the methylthiotransferase family. RimO subfamily. [4Fe-4S] cluster serves as cofactor.

The protein resides in the cytoplasm. The catalysed reaction is L-aspartate(89)-[ribosomal protein uS12]-hydrogen + (sulfur carrier)-SH + AH2 + 2 S-adenosyl-L-methionine = 3-methylsulfanyl-L-aspartate(89)-[ribosomal protein uS12]-hydrogen + (sulfur carrier)-H + 5'-deoxyadenosine + L-methionine + A + S-adenosyl-L-homocysteine + 2 H(+). Catalyzes the methylthiolation of an aspartic acid residue of ribosomal protein uS12. The chain is Ribosomal protein uS12 methylthiotransferase RimO from Shigella flexneri.